Consider the following 356-residue polypeptide: Histidinol-phosphate aminotransferase 2 (356 aa).

An N6-(pyridoxal phosphate)lysine modification is found at Lys213.

Belongs to the class-II pyridoxal-phosphate-dependent aminotransferase family. Histidinol-phosphate aminotransferase subfamily. As to quaternary structure, homodimer. Requires pyridoxal 5'-phosphate as cofactor.

It catalyses the reaction L-histidinol phosphate + 2-oxoglutarate = 3-(imidazol-4-yl)-2-oxopropyl phosphate + L-glutamate. The protein operates within amino-acid biosynthesis; L-histidine biosynthesis; L-histidine from 5-phospho-alpha-D-ribose 1-diphosphate: step 7/9. This Burkholderia mallei (strain ATCC 23344) protein is Histidinol-phosphate aminotransferase 2.